The sequence spans 146 residues: Hemoglobin subunit beta-1 (146 aa).

The 145-residue stretch at 2–146 (EWTDQERATI…VVSALGKQYH (145 aa)) folds into the Globin domain. The heme b site is built by His63 and His92.

The protein belongs to the globin family. In terms of assembly, hb1 is a heterotetramer of two alpha-1 chains and two beta-1 chains. Hb2 is a heterotetramer of two alpha-2 chains and two beta-1 chains. HbC is a heterotetramer of two alpha-1 chains and two beta-2 chains. In terms of tissue distribution, red blood cells.

Its function is as follows. Involved in oxygen transport from gills to the various peripheral tissues. In Eleginops maclovinus (Patagonian blennie), this protein is Hemoglobin subunit beta-1.